Here is a 75-residue protein sequence, read N- to C-terminus: DNA-directed RNA polymerase subunit omega (75 aa).

It belongs to the RNA polymerase subunit omega family. As to quaternary structure, in cyanobacteria the RNAP catalytic core is composed of 2 alpha, 1 beta, 1 beta', 1 gamma and 1 omega subunit. When a sigma factor is associated with the core the holoenzyme is formed, which can initiate transcription.

It catalyses the reaction RNA(n) + a ribonucleoside 5'-triphosphate = RNA(n+1) + diphosphate. In terms of biological role, promotes RNA polymerase assembly. Latches the N- and C-terminal regions of the beta' subunit thereby facilitating its interaction with the beta and alpha subunits. This is DNA-directed RNA polymerase subunit omega from Synechococcus sp. (strain WH7803).